The primary structure comprises 287 residues: Hydroxysteroid 11-beta-dehydrogenase 1-like protein (287 aa).

Residues 1-15 (MKVLLLTGLGALFFA) form the signal peptide. NADP(+) is bound by residues 36–62 (GASA…TAHT), 87–88 (DM), and 114–116 (NHI). Serine 165 contacts substrate. Catalysis depends on tyrosine 178, which acts as the Proton acceptor. Residues 178-182 (YSAAK) and 211-217 (GLRDRAS) each bind NADP(+).

It belongs to the short-chain dehydrogenases/reductases (SDR) family.

The protein resides in the secreted. The enzyme catalyses cortisone + NADPH + H(+) = cortisol + NADP(+). Its function is as follows. Unidirectional NADP(+)-dependent cortisol dehydrogenase (in vitro). This is Hydroxysteroid 11-beta-dehydrogenase 1-like protein (HSD11B1L) from Macaca fascicularis (Crab-eating macaque).